A 120-amino-acid chain; its full sequence is MNILDQLDAKSLRDDVPDFRPGDTLNVHVNIVEGNRSRVQVFKGFVMGRQGSGVRETFTVRKVSFGVGVERTFPVHSPIIDKIELVSRGDVRRAKLYYMRDRHGKAARIREKRESSASSK.

Belongs to the bacterial ribosomal protein bL19 family.

Its function is as follows. This protein is located at the 30S-50S ribosomal subunit interface and may play a role in the structure and function of the aminoacyl-tRNA binding site. The chain is Large ribosomal subunit protein bL19 from Kocuria rhizophila (strain ATCC 9341 / DSM 348 / NBRC 103217 / DC2201).